Reading from the N-terminus, the 230-residue chain is uncharacterized protein (230 aa).

This is an uncharacterized protein from Aquifex aeolicus (strain VF5).